The primary structure comprises 333 residues: Chemokine XC receptor 1 (333 aa).

The Extracellular portion of the chain corresponds to 1-31; that stretch reads MESSGNPESTTFFYYDLQSQPCENQAWVFAT. The helical transmembrane segment at 32-59 threads the bilayer; the sequence is LATTVLYCLVFLLSLVGNSLVLWVLVKY. Over 60–69 the chain is Cytoplasmic; the sequence is ESLESLTNIF. A helical membrane pass occupies residues 70–89; that stretch reads ILNLCLSDLVFACLLPVWIS. Topologically, residues 90–103 are extracellular; the sequence is PYHWGWVLGDFLCK. C102 and C175 are oxidised to a cystine. The helical transmembrane segment at 104–125 threads the bilayer; it reads LLNMIFSISLYSSIFFLTIMTI. Residues 126–142 are Cytoplasmic-facing; it reads HRYLSVVSPLSTLRVPT. Residues 143-167 form a helical membrane-spanning segment; that stretch reads LRCRVLVTMAVWVASILSSILDTIF. The Extracellular segment spans residues 168–190; the sequence is HKVLSSGCDYSELTWYLTSVYQH. Residues 191-209 traverse the membrane as a helical segment; the sequence is NLFFLLSLGIILFCYVEIL. Residues 210 to 225 are Cytoplasmic-facing; that stretch reads RTLFRSRSKRRHRTVK. Residues 226–250 traverse the membrane as a helical segment; that stretch reads LIFAIVVAYFLSWGPYNFTLFLQTL. At 251 to 267 the chain is on the extracellular side; that stretch reads FRTQIIRSCEAKQQLEY. The chain crosses the membrane as a helical span at residues 268-291; sequence ALLICRNLAFSHCCFNPVLYVFVG. The Cytoplasmic segment spans residues 292 to 333; that stretch reads VKFRTHLKHVLRQFWFCRLQAPSPASIPHSPGAFAYEGASFY.

Belongs to the G-protein coupled receptor 1 family.

It is found in the cell membrane. Receptor for chemokines SCYC1 and SCYC2. Subsequently transduces a signal by increasing the intracellular calcium ions level. Receptor for XCL1/Lymphotactin. This chain is Chemokine XC receptor 1 (XCR1), found in Homo sapiens (Human).